Reading from the N-terminus, the 88-residue chain is Small ribosomal subunit protein uS15 (88 aa).

A compositionally biased stretch (basic and acidic residues) spans 1–20 (MLATEKKQELIDQYKRHEGD). The disordered stretch occupies residues 1 to 21 (MLATEKKQELIDQYKRHEGDT).

Belongs to the universal ribosomal protein uS15 family. In terms of assembly, part of the 30S ribosomal subunit. Forms a bridge to the 50S subunit in the 70S ribosome, contacting the 23S rRNA.

Functionally, one of the primary rRNA binding proteins, it binds directly to 16S rRNA where it helps nucleate assembly of the platform of the 30S subunit by binding and bridging several RNA helices of the 16S rRNA. In terms of biological role, forms an intersubunit bridge (bridge B4) with the 23S rRNA of the 50S subunit in the ribosome. The chain is Small ribosomal subunit protein uS15 from Syntrophotalea carbinolica (strain DSM 2380 / NBRC 103641 / GraBd1) (Pelobacter carbinolicus).